The sequence spans 398 residues: Stearoyl-[acyl-carrier-protein] 9-desaturase, chloroplastic (398 aa).

The transit peptide at 1–34 (MALKLNPLASQPYNFPSSARPPISTFRSPKFLCL) directs the protein to the chloroplast. Positions 140, 178, 181, 231, 264, and 267 each coordinate Fe cation.

Belongs to the fatty acid desaturase type 2 family. As to quaternary structure, homodimer. Fe(2+) serves as cofactor.

It is found in the plastid. It localises to the chloroplast. It carries out the reaction octadecanoyl-[ACP] + 2 reduced [2Fe-2S]-[ferredoxin] + O2 + 2 H(+) = (9Z)-octadecenoyl-[ACP] + 2 oxidized [2Fe-2S]-[ferredoxin] + 2 H2O. The protein operates within lipid metabolism; fatty acid metabolism. Its function is as follows. Converts stearoyl-ACP to oleoyl-ACP by introduction of a cis double bond between carbons 9 and 10 of the acyl chain. The protein is Stearoyl-[acyl-carrier-protein] 9-desaturase, chloroplastic of Brassica napus (Rape).